A 127-amino-acid polypeptide reads, in one-letter code: Large ribosomal subunit protein bL12 (127 aa).

The disordered stretch occupies residues Leu93–Gln127. The segment covering Val105 to Ile117 has biased composition (basic and acidic residues).

It belongs to the bacterial ribosomal protein bL12 family. In terms of assembly, homodimer. Part of the ribosomal stalk of the 50S ribosomal subunit. Forms a multimeric L10(L12)X complex, where L10 forms an elongated spine to which 2 to 4 L12 dimers bind in a sequential fashion. Binds GTP-bound translation factors.

Forms part of the ribosomal stalk which helps the ribosome interact with GTP-bound translation factors. Is thus essential for accurate translation. The polypeptide is Large ribosomal subunit protein bL12 (Salinibacter ruber (strain DSM 13855 / M31)).